The primary structure comprises 155 residues: Transmembrane protein C1orf162 (155 aa).

A disordered region spans residues 1–28 (MGGNGSTCKPDTERQGTLSTAAPTTSPA). The span at 19–28 (STAAPTTSPA) shows a compositional bias: low complexity. A helical transmembrane segment spans residues 41–61 (ILAFCAGVLLTLLLIAFIFLI). Residues 92–114 (ADHSKPQAPDPHSDPPAKLSSIP) are disordered. Residue Ser-140 is modified to Phosphoserine.

It localises to the membrane. This Homo sapiens (Human) protein is Transmembrane protein C1orf162 (C1orf162).